A 946-amino-acid chain; its full sequence is Bifunctional glutamine synthetase adenylyltransferase/adenylyl-removing enzyme (946 aa).

The adenylyl removase stretch occupies residues 1 to 440 (MKPLSSPLQQ…VFNELIGDDE (440 aa)). Residues 449 to 946 (SEQWRELWQD…ASWQKWLVEE (498 aa)) form an adenylyl transferase region.

Belongs to the GlnE family. It depends on Mg(2+) as a cofactor.

The enzyme catalyses [glutamine synthetase]-O(4)-(5'-adenylyl)-L-tyrosine + phosphate = [glutamine synthetase]-L-tyrosine + ADP. It carries out the reaction [glutamine synthetase]-L-tyrosine + ATP = [glutamine synthetase]-O(4)-(5'-adenylyl)-L-tyrosine + diphosphate. In terms of biological role, involved in the regulation of glutamine synthetase GlnA, a key enzyme in the process to assimilate ammonia. When cellular nitrogen levels are high, the C-terminal adenylyl transferase (AT) inactivates GlnA by covalent transfer of an adenylyl group from ATP to specific tyrosine residue of GlnA, thus reducing its activity. Conversely, when nitrogen levels are low, the N-terminal adenylyl removase (AR) activates GlnA by removing the adenylyl group by phosphorolysis, increasing its activity. The regulatory region of GlnE binds the signal transduction protein PII (GlnB) which indicates the nitrogen status of the cell. In Escherichia coli O45:K1 (strain S88 / ExPEC), this protein is Bifunctional glutamine synthetase adenylyltransferase/adenylyl-removing enzyme.